The chain runs to 273 residues: Undecaprenyl-diphosphatase (273 aa).

Helical transmembrane passes span 13–35 (GLVE…VFGN), 45–62 (VFEI…VFEY), 82–102 (FVLN…LFGK), 108–128 (LFNP…ILWV), 144–164 (ALRP…LIPG), 186–206 (TEFS…YDVL), 219–239 (LILI…KALL), and 250–270 (FAYY…SGWI).

This sequence belongs to the UppP family.

The protein resides in the cell inner membrane. It carries out the reaction di-trans,octa-cis-undecaprenyl diphosphate + H2O = di-trans,octa-cis-undecaprenyl phosphate + phosphate + H(+). Its function is as follows. Catalyzes the dephosphorylation of undecaprenyl diphosphate (UPP). Confers resistance to bacitracin. This chain is Undecaprenyl-diphosphatase, found in Neisseria meningitidis serogroup C (strain 053442).